The sequence spans 399 residues: Salivary protein Tsal1 (399 aa).

Residues 1-22 (MALKLVYGVFTLALLGISSVNA) form the signal peptide. A glycan (N-linked (GlcNAc...) asparagine) is linked at N268.

The protein belongs to the DNA/RNA non-specific endonuclease family. Requires a divalent metal cation as cofactor. In terms of tissue distribution, saliva (at protein level).

It is found in the secreted. Its function is as follows. Binds double-stranded DNA (dsDNA) with high affinity. Binds double-stranded RNA. Binds single-stranded DNA with lower affinity and with a preference for purine-rich sequences. Shows residual nuclease activity for dsDNA. May facilitate blood meal intake by lowering the local viscosity created by the release of host DNA. The polypeptide is Salivary protein Tsal1 (Glossina morsitans morsitans (Savannah tsetse fly)).